The sequence spans 479 residues: Aspartyl/glutamyl-tRNA(Asn/Gln) amidotransferase subunit B (479 aa).

This sequence belongs to the GatB/GatE family. GatB subfamily. In terms of assembly, heterotrimer of A, B and C subunits.

It carries out the reaction L-glutamyl-tRNA(Gln) + L-glutamine + ATP + H2O = L-glutaminyl-tRNA(Gln) + L-glutamate + ADP + phosphate + H(+). It catalyses the reaction L-aspartyl-tRNA(Asn) + L-glutamine + ATP + H2O = L-asparaginyl-tRNA(Asn) + L-glutamate + ADP + phosphate + 2 H(+). Its function is as follows. Allows the formation of correctly charged Asn-tRNA(Asn) or Gln-tRNA(Gln) through the transamidation of misacylated Asp-tRNA(Asn) or Glu-tRNA(Gln) in organisms which lack either or both of asparaginyl-tRNA or glutaminyl-tRNA synthetases. The reaction takes place in the presence of glutamine and ATP through an activated phospho-Asp-tRNA(Asn) or phospho-Glu-tRNA(Gln). This is Aspartyl/glutamyl-tRNA(Asn/Gln) amidotransferase subunit B from Streptococcus mutans serotype c (strain ATCC 700610 / UA159).